The primary structure comprises 327 residues: GPI-linked NAD(P)(+)--arginine ADP-ribosyltransferase 1 (327 aa).

The N-terminal stretch at 1 to 22 (MWVPAVANLLLLSLGLLEAIQA) is a signal peptide. 2 cysteine pairs are disulfide-bonded: cysteine 53-cysteine 277 and cysteine 174-cysteine 224. N-linked (GlcNAc...) asparagine glycosylation occurs at asparagine 65. One can recognise a TR mART core domain in the interval 73–273 (KVYADGWALA…IYLKALGKRS (201 aa)). NAD(+) contacts are provided by tyrosine 121 and arginine 179. Catalysis depends on residues arginine 179 and serine 202. Position 233 (serine 233) interacts with NAD(+). The active site involves glutamate 240. Residue asparagine 253 is glycosylated (N-linked (GlcNAc...) asparagine). Serine 295 carries the GPI-anchor amidated serine lipid modification. The propeptide at 296–327 (ASAQERLSTAWSLLLLLAFLAVGPFPGSPGLF) is removed in mature form.

Belongs to the Arg-specific ADP-ribosyltransferase family. In terms of tissue distribution, primarily in skeletal and cardiac muscle.

Its subcellular location is the sarcoplasmic reticulum membrane. It carries out the reaction L-arginyl-[protein] + NAD(+) = N(omega)-(ADP-D-ribosyl)-L-arginyl-[protein] + nicotinamide + H(+). In terms of biological role, has ADP-ribosyltransferase activity toward GLP1R. This chain is GPI-linked NAD(P)(+)--arginine ADP-ribosyltransferase 1 (ART1), found in Oryctolagus cuniculus (Rabbit).